The sequence spans 70 residues: Small ribosomal subunit protein bS21B (70 aa).

A disordered region spans residues 37–70 (SYEKPTTERKRKKAAAVARLRKQVRRSMPPKKKY). Residues 45–70 (RKRKKAAAVARLRKQVRRSMPPKKKY) show a composition bias toward basic residues.

Belongs to the bacterial ribosomal protein bS21 family.

This chain is Small ribosomal subunit protein bS21B, found in Burkholderia pseudomallei (strain K96243).